The primary structure comprises 335 residues: Phospho-N-acetylmuramoyl-pentapeptide-transferase (335 aa).

10 consecutive transmembrane segments (helical) span residues 3–23 (LTLI…PHFI), 53–73 (GGTV…ILFF), 78–98 (SMGL…IGFL), 118–138 (LSLQ…PSGI), 143–163 (VFGF…FWVV), 175–195 (IDGL…VIAI), 200–220 (YDVL…FIFN), 226–246 (VFMG…ISIA), 251–271 (WTLL…MLQV), and 314–334 (VDAF…AILY).

Belongs to the glycosyltransferase 4 family. MraY subfamily. Mg(2+) is required as a cofactor.

The protein localises to the cell membrane. It carries out the reaction UDP-N-acetyl-alpha-D-muramoyl-L-alanyl-gamma-D-glutamyl-L-lysyl-D-alanyl-D-alanine + di-trans,octa-cis-undecaprenyl phosphate = Mur2Ac(oyl-L-Ala-gamma-D-Glu-L-Lys-D-Ala-D-Ala)-di-trans,octa-cis-undecaprenyl diphosphate + UMP. It participates in cell wall biogenesis; peptidoglycan biosynthesis. In terms of biological role, catalyzes the initial step of the lipid cycle reactions in the biosynthesis of the cell wall peptidoglycan: transfers peptidoglycan precursor phospho-MurNAc-pentapeptide from UDP-MurNAc-pentapeptide onto the lipid carrier undecaprenyl phosphate, yielding undecaprenyl-pyrophosphoryl-MurNAc-pentapeptide, known as lipid I. The sequence is that of Phospho-N-acetylmuramoyl-pentapeptide-transferase from Streptococcus uberis (strain ATCC BAA-854 / 0140J).